The primary structure comprises 200 residues: NADH-quinone oxidoreductase subunit C 1 (200 aa).

The protein belongs to the complex I 30 kDa subunit family. NDH-1 is composed of 14 different subunits. Subunits NuoB, C, D, E, F, and G constitute the peripheral sector of the complex.

The protein resides in the cell inner membrane. It carries out the reaction a quinone + NADH + 5 H(+)(in) = a quinol + NAD(+) + 4 H(+)(out). In terms of biological role, NDH-1 shuttles electrons from NADH, via FMN and iron-sulfur (Fe-S) centers, to quinones in the respiratory chain. The immediate electron acceptor for the enzyme in this species is believed to be ubiquinone. Couples the redox reaction to proton translocation (for every two electrons transferred, four hydrogen ions are translocated across the cytoplasmic membrane), and thus conserves the redox energy in a proton gradient. The chain is NADH-quinone oxidoreductase subunit C 1 from Rhizobium etli (strain CIAT 652).